The primary structure comprises 557 residues: Urocanate hydratase (557 aa).

Residues 53 to 54 (GG), Gln-131, 177 to 179 (GMG), 197 to 202 (ECQQSR), 243 to 244 (NA), 264 to 268 (QTSAH), 274 to 275 (YL), and 323 to 324 (YG) contribute to the NAD(+) site. The active site involves Cys-411. NAD(+)-binding positions include 455-456 (RE) and Gly-493.

As to quaternary structure, homodimer. NAD(+) serves as cofactor.

The protein resides in the cytoplasm. The catalysed reaction is 4-imidazolone-5-propanoate = trans-urocanate + H2O. It participates in amino-acid degradation; L-histidine degradation into L-glutamate; N-formimidoyl-L-glutamate from L-histidine: step 2/3. Its function is as follows. Catalyzes the conversion of urocanate to 4-imidazolone-5-propionate. This Pseudomonas putida (Arthrobacter siderocapsulatus) protein is Urocanate hydratase.